Reading from the N-terminus, the 133-residue chain is Classical arabinogalactan protein 5 (133 aa).

A signal peptide spans 1–21; the sequence is MASKSVVVFLFLALVASSVVA. Position 22 is a pyrrolidone carboxylic acid (Gln-22). The disordered stretch occupies residues 23 to 110; sequence APGPAPTISP…QSPLSGSPNA (88 aa). Positions 25-37 are enriched in pro residues; the sequence is GPAPTISPLPATP. A compositionally biased stretch (low complexity) spans 38-48; it reads TPSQSPRATAP. Residues 49–81 show a composition bias toward pro residues; the sequence is APSPSANPPPSAPTTAPPVSQPPTESPPAPPTS. A lipid anchor (GPI-anchor amidated asparagine) is attached at Asn-109. The propeptide at 110 to 133 is removed in mature form; sequence AAAVSRVSLVGTFAGVAVIAALLL.

The protein belongs to the classical AGP family. O-glycosylated on the hydroxyproline residues. Expressed at a low level in flowers and siliques.

It localises to the cell membrane. Its function is as follows. Proteoglycan that seems to be implicated in diverse developmental roles such as differentiation, cell-cell recognition, embryogenesis and programmed cell death. The sequence is that of Classical arabinogalactan protein 5 (AGP5) from Arabidopsis thaliana (Mouse-ear cress).